The sequence spans 226 residues: Agamous-like MADS-box protein AP3 (226 aa).

The MADS-box domain occupies 1-61; the sequence is MARGKIEIKR…GKLHEYISPS (61 aa). A K-box domain is found at 84 to 174; that stretch reads YERMQENLKK…LHEFDARDRD (91 aa).

In terms of tissue distribution, expressed during flower development in stamens and petals.

It is found in the nucleus. Its function is as follows. Probable transcription factor involved in flower development. The protein is Agamous-like MADS-box protein AP3 of Vitis vinifera (Grape).